The primary structure comprises 264 residues: Thymidylate synthase (264 aa).

Position 21 (Arg21) interacts with dUMP. His51 is a binding site for (6R)-5,10-methylene-5,6,7,8-tetrahydrofolate. 126-127 (RR) contacts dUMP. Catalysis depends on Cys146, which acts as the Nucleophile. Residues 166 to 169 (RSCD), Asn177, and 207 to 209 (HLY) each bind dUMP. Residue Asp169 participates in (6R)-5,10-methylene-5,6,7,8-tetrahydrofolate binding. Ala263 lines the (6R)-5,10-methylene-5,6,7,8-tetrahydrofolate pocket.

It belongs to the thymidylate synthase family. Bacterial-type ThyA subfamily. Homodimer.

Its subcellular location is the cytoplasm. It carries out the reaction dUMP + (6R)-5,10-methylene-5,6,7,8-tetrahydrofolate = 7,8-dihydrofolate + dTMP. Its pathway is pyrimidine metabolism; dTTP biosynthesis. Catalyzes the reductive methylation of 2'-deoxyuridine-5'-monophosphate (dUMP) to 2'-deoxythymidine-5'-monophosphate (dTMP) while utilizing 5,10-methylenetetrahydrofolate (mTHF) as the methyl donor and reductant in the reaction, yielding dihydrofolate (DHF) as a by-product. This enzymatic reaction provides an intracellular de novo source of dTMP, an essential precursor for DNA biosynthesis. The chain is Thymidylate synthase from Xenorhabdus nematophila (strain ATCC 19061 / DSM 3370 / CCUG 14189 / LMG 1036 / NCIMB 9965 / AN6).